The chain runs to 740 residues: Catalase-peroxidase 2 (740 aa).

An N-terminal signal peptide occupies residues 1–27 (MFKKTKPRISILALTISCAIYSGAALA). Residues 106–228 (WHSAGTYRIY…LAAVQMGLIY (123 aa)) constitute a cross-link (tryptophyl-tyrosyl-methioninium (Trp-Tyr) (with M-254)). The active-site Proton acceptor is the H107. The tryptophyl-tyrosyl-methioninium (Tyr-Met) (with W-106) cross-link spans 228-254 (YVNPEGPNGVPDPLLAAKDIRDTFGRM). H269 is a binding site for heme b.

It belongs to the peroxidase family. Peroxidase/catalase subfamily. As to quaternary structure, homodimer or homotetramer. Heme b serves as cofactor. Formation of the three residue Trp-Tyr-Met cross-link is important for the catalase, but not the peroxidase activity of the enzyme.

It catalyses the reaction H2O2 + AH2 = A + 2 H2O. It carries out the reaction 2 H2O2 = O2 + 2 H2O. Functionally, bifunctional enzyme with both catalase and broad-spectrum peroxidase activity. This is Catalase-peroxidase 2 from Cellvibrio japonicus (strain Ueda107) (Pseudomonas fluorescens subsp. cellulosa).